A 469-amino-acid polypeptide reads, in one-letter code: Acetyl-CoA decarbonylase/synthase complex subunit beta 1 (469 aa).

[Ni-Fe-S] cluster-binding residues include Cys-189, Cys-192, Cys-278, and Cys-280.

The protein belongs to the CdhC family. As to quaternary structure, monomer. The ACDS complex is made up of alpha, epsilon, beta, gamma and delta chains with a probable stoichiometry of (alpha(2)epsilon(2))(4)-beta(8)-(gamma(1)delta(1))(8) (Potential). [Ni-Fe-S] cluster serves as cofactor.

It catalyses the reaction Co(I)-[corrinoid Fe-S protein] + acetyl-CoA + H(+) = methyl-Co(III)-[corrinoid Fe-S protein] + CO + CoA. It functions in the pathway one-carbon metabolism; methanogenesis from acetate. Functionally, part of a complex that catalyzes the reversible cleavage of acetyl-CoA, allowing growth on acetate as sole source of carbon and energy. The alpha-epsilon complex generates CO from CO(2), while the beta subunit (this protein) combines the CO with CoA and a methyl group to form acetyl-CoA. The methyl group, which is incorporated into acetyl-CoA, is transferred to the beta subunit by a corrinoid iron-sulfur protein (the gamma-delta complex). This Methanosarcina thermophila protein is Acetyl-CoA decarbonylase/synthase complex subunit beta 1 (cdhC1).